Here is a 108-residue protein sequence, read N- to C-terminus: uncharacterized protein (108 aa).

The chain crosses the membrane as a helical span at residues Phe7–Leu27.

To N.crassa NCU05373.1.

The protein localises to the membrane. This is an uncharacterized protein from Schizosaccharomyces pombe (strain 972 / ATCC 24843) (Fission yeast).